The following is a 425-amino-acid chain: Serine--tRNA ligase (425 aa).

An L-serine-binding site is contributed by 230-232; the sequence is TGE. ATP is bound at residue 261 to 263; it reads RKE. Residue Glu284 participates in L-serine binding. Residue 348 to 351 coordinates ATP; sequence EISS. Ser385 is an L-serine binding site.

This sequence belongs to the class-II aminoacyl-tRNA synthetase family. Type-1 seryl-tRNA synthetase subfamily. Homodimer. The tRNA molecule binds across the dimer.

The protein resides in the cytoplasm. It carries out the reaction tRNA(Ser) + L-serine + ATP = L-seryl-tRNA(Ser) + AMP + diphosphate + H(+). It catalyses the reaction tRNA(Sec) + L-serine + ATP = L-seryl-tRNA(Sec) + AMP + diphosphate + H(+). It participates in aminoacyl-tRNA biosynthesis; selenocysteinyl-tRNA(Sec) biosynthesis; L-seryl-tRNA(Sec) from L-serine and tRNA(Sec): step 1/1. Its function is as follows. Catalyzes the attachment of serine to tRNA(Ser). Is also able to aminoacylate tRNA(Sec) with serine, to form the misacylated tRNA L-seryl-tRNA(Sec), which will be further converted into selenocysteinyl-tRNA(Sec). This is Serine--tRNA ligase from Wolbachia sp. subsp. Brugia malayi (strain TRS).